The sequence spans 248 residues: MALLEICCYSMECALTAQQNGADRVELCAAPKEGGLTPSLGVLKSVRQRVTIPVHPIIRPRGGDFCYSDGEFAAILEDVRTVRELGFPGLVTGVLDVDGNVDMSRMEKIMAAAGPLAVTFHRAFDMCANPLNTLNNLAELGITRVLTSGQKSDALQGLSKIMELIAHRDAPIIMAGAGVRAENLHHFLAAGVLEVHSSAGAWQASPMRYRNQGLSMSSDAHADEYSRYVVDGAAVAEMKGIIERHQAK.

This sequence belongs to the CutC family. In terms of assembly, homodimer.

The protein localises to the cytoplasm. The chain is PF03932 family protein CutC from Shigella dysenteriae serotype 1 (strain Sd197).